We begin with the raw amino-acid sequence, 164 residues long: uncharacterized protein (164 aa).

The disordered stretch occupies residues 144 to 164 (GFISPEKEHESEDMTSQSLVA).

This is an uncharacterized protein from Synechocystis sp. (strain ATCC 27184 / PCC 6803 / Kazusa).